Here is a 148-residue protein sequence, read N- to C-terminus: Cytochrome c oxidase subunit 6, mitochondrial (148 aa).

The transit peptide at 1-40 (MASFFRTAVRGPSAGLFRAVARPQPIAARVSLFSTSSRFR) directs the protein to the mitochondrion.

This sequence belongs to the cytochrome c oxidase subunit 5A family. In terms of assembly, component of the cytochrome c oxidase (complex IV, CIV), a multisubunit enzyme composed of 11 subunits. The complex is composed of a catalytic core of 3 subunits Cox1, Cox2 and Cox3, encoded in the mitochondrial DNA, and 8 supernumerary subunits Cox4, Cox5a/Cox5, Cox6, Cox7, Cox8, Cox7a/Cox9, Cox6b/Cox12 and Cox6a/Cox13, which are encoded in the nuclear genome. The complex exists as a monomer or a dimer and forms respiratory supercomplexes (SCs) in the inner mitochondrial membrane with NADH-ubiquinone oxidoreductase (complex I, CI) and ubiquinol-cytochrome c oxidoreductase (cytochrome b-c1 complex, complex III, CIII), resulting in various different assemblies (supercomplexes I(1)IV(1), I(1)III(3)IV(2), III(2)IV(1) and III(2)IV(2) as well as larger supercomplexes of compositions like I(1)III(2)IV(5-6)).

The protein localises to the mitochondrion inner membrane. It participates in energy metabolism; oxidative phosphorylation. Component of the cytochrome c oxidase, the last enzyme in the mitochondrial electron transport chain which drives oxidative phosphorylation. The respiratory chain contains 3 multisubunit complexes succinate dehydrogenase (complex II, CII), ubiquinol-cytochrome c oxidoreductase (cytochrome b-c1 complex, complex III, CIII) and cytochrome c oxidase (complex IV, CIV), that cooperate to transfer electrons derived from NADH and succinate to molecular oxygen, creating an electrochemical gradient over the inner membrane that drives transmembrane transport and the ATP synthase. Cytochrome c oxidase is the component of the respiratory chain that catalyzes the reduction of oxygen to water. Electrons originating from reduced cytochrome c in the intermembrane space (IMS) are transferred via the dinuclear copper A center (CU(A)) of Cox2 and heme A of Cox1 to the active site in Cox1, a binuclear center (BNC) formed by heme A3 and copper B (CU(B)). The BNC reduces molecular oxygen to 2 water molecules using 4 electrons from cytochrome c in the IMS and 4 protons from the mitochondrial matrix. The chain is Cytochrome c oxidase subunit 6, mitochondrial (cox-6) from Neurospora crassa (strain ATCC 24698 / 74-OR23-1A / CBS 708.71 / DSM 1257 / FGSC 987).